Consider the following 662-residue polypeptide: Forkhead box protein O1 (662 aa).

2 disordered regions span residues 1–62 and 122–165; these read MAEA…PSAS and GCLH…SRRN. At Thr-24 the chain carries Phosphothreonine; by PKB/AKT1 or PKB/AKT2 and SGK1. The segment covering 33 to 62 has biased composition (low complexity); it reads SQSNSATSSPAPSGGAAANPDAAAGLPSAS. Positions 126–146 are enriched in pro residues; that stretch reads PAPPQQPPPPGPLSQHPPVPP. Positions 167 to 261 form a DNA-binding region, fork-head; the sequence is WGNLSYADLI…KSGKSPRRRA (95 aa). 2 DNA-binding regions span residues 218–225 and 241–244; these read NSIRHNLS and SSWW. Ser-219 bears the Phosphoserine; by STK4/MST1 mark. Phosphoserine occurs at positions 225, 241, and 242. A disordered region spans residues 241–342; that stretch reads SSWWMLNPEG…GRLSPIMTEQ (102 aa). N6-acetyllysine is present on residues Lys-252 and Lys-255. Ser-256 carries the phosphoserine; by CDK1 modification. An omega-N-methylarginine; by PRMT1 mark is found at Arg-258 and Arg-260. The short motif at 258 to 260 is the Nuclear localization signal element; it reads RRR. Residue Ser-263 is modified to Phosphoserine; by PKB/AKT1 and SGK1. N6-acetyllysine is present on residues Lys-269, Lys-272, and Lys-281. Basic residues predominate over residues 271-282; sequence AKSRGRAAKKKA. The sufficient for interaction with NLK stretch occupies residues 290-570; it reads GAGDSPGSQF…RLTQEKTALQ (281 aa). Phosphoserine is present on residues Ser-294 and Ser-305. Positions 316-333 are enriched in polar residues; that stretch reads NWSTFRPRTSSNASTISG. A Phosphoserine; by PKB/AKT1 modification is found at Ser-326. Position 329 is a phosphoserine; by CK1 and SGK1 (Ser-329). Ser-332 carries the post-translational modification Phosphoserine; by CK1. Phosphoserine; by DYRK1A is present on Ser-336. Residue Thr-340 is modified to Phosphothreonine. Positions 370 to 466 are required for interaction with RUNX2; sequence SEISNPENME…GGMAQYNCAA (97 aa). Lys-430 is modified (N6-acetyllysine). Residues 469 to 473 carry the Required for interaction with SIRT1 motif; it reads LKELL.

Interacts with LRPPRC. Interacts with RUNX2; the interaction inhibits RUNX2 transcriptional activity and mediates the IGF1/insulin-dependent BGLAP expression in osteoblasts Interacts with PPP2R1A; the interaction regulates the dephosphorylation of FOXO1 at Thr-24 and Ser-263 leading to its nuclear import. Interacts with NLK. Interacts with SIRT1; the interaction results in the deacetylation of FOXO1 leading to activation of FOXO1-mediated transcription of genes involved in DNA repair and stress resistance. Binds to CDK1. Interacts with the 14-3-3 proteins, YWHAG and YWHAZ; the interactions require insulin-stimulated phosphorylation on Thr-24, promote nuclear exit and loss of transcriptional activity. Interacts with SKP2; the interaction ubiquitinates FOXO1 leading to its proteasomal degradation. The interaction requires the presence of KRIT1. Interacts (via the C-terminal half) with ATF4 (via its DNA binding domain); the interaction occurs in osteoblasts, regulates glucose homeostasis via suppression of beta-cell proliferation and subsequent decrease in insulin production. Interacts with PRMT1; the interaction methylates FOXO1, prevents PKB/AKT1 phosphorylation and retains FOXO1 in the nucleus. Interacts with EP300 and CREBBP; the interactions acetylate FOXO1. Interacts with SIRT2; the interaction is disrupted in response to oxidative stress or serum deprivation, leading to increased level of acetylated FOXO1, which promotes stress-induced autophagy by stimulating E1-like activating enzyme ATG7. Interacts (acetylated form) with ATG7; the interaction is increased in response to oxidative stress or serum deprivation and promotes the autophagic process leading to cell death. Interacts (acetylated form) with PPARG. Interacts with XBP1; this interaction is direct and leads to FOXO1 ubiquitination and degradation via the proteasome pathway. Interacts (via the Fork-head domain) with CEBPA; the interaction increases when FOXO1 is deacetylated. Interacts with WDFY2. Forms a complex with WDFY2 and AKT1. Interacts with CRY1. Interacts with PPIA/CYPA; the interaction promotes FOXO1 dephosphorylation, nuclear accumulation and transcriptional activity. Interacts with TOX4; FOXO1 is required for full induction of TOX4-dependent activity and the interaction is inhibited by insulin. Interacts (when phosphorylated on Ser-263) with STUB1/CHIP. Phosphorylation by NLK promotes nuclear export and inhibits the transcriptional activity. In response to growth factors, phosphorylation on Thr-24, Ser-263 and Ser-326 by PKB/AKT1 promotes nuclear export and inactivation of transactivational activity. Phosphorylation on Thr-24 is required for binding 14-3-3 proteins. Phosphorylation of Ser-263 decreases DNA-binding activity and promotes the phosphorylation of Thr-24 and Ser-326, permitting phosphorylation of Ser-329 and Ser-332, probably by CDK1, leading to nuclear exclusion and loss of function. Stress signals, such as response to oxygen or nitric oxide, attenuate the PKB/AKT1-mediated phosphorylation leading to nuclear retention. Phosphorylation of Ser-336 is independent of IGF1 and leads to reduced function. Dephosphorylated on Thr-24 and Ser-263 by PP2A in beta-cells under oxidative stress leading to nuclear retention. Phosphorylation of Ser-256 by CDK1 disrupts binding of 14-3-3 proteins leading to nuclear accumulation and has no effect on DNA binding nor transcriptional activity. Phosphorylation by STK4/MST1 on Ser-219, upon oxidative stress, inhibits binding to 14-3-3 proteins and nuclear export. PPIA/CYPA promotes its dephosphorylation on Ser-263. Post-translationally, ubiquitinated by SKP2. Ubiquitination leads to proteasomal degradation. Ubiquitinated by STUB1/CHIP; when Ser-263 is phosphorylated. In terms of processing, methylation inhibits AKT1-mediated phosphorylation at Ser-263 and is increased by oxidative stress. Acetylated. Acetylation at Lys-269 and Lys-281 are necessary for autophagic cell death induction. Deacetylated by SIRT2 in response to oxidative stress or serum deprivation, thereby negatively regulating FOXO1-mediated autophagic cell death. Once in the nucleus, acetylated by CREBBP/EP300. Acetylation diminishes the interaction with target DNA and attenuates the transcriptional activity. It increases the phosphorylation at Ser-263. Deacetylation by SIRT1 results in reactivation of the transcriptional activity. Oxidative stress by hydrogen peroxide treatment appears to promote deacetylation and uncoupling of insulin-induced phosphorylation. By contrast, resveratrol acts independently of acetylation. Acetylated at Lys-430, promoting its localization to the nucleus and transcription factor activity. Deacetylation at Lys-430 by SIRT6, promotes its translocation into the cytoplasm, preventing its transcription factor activity. Deacetylation and subsequent inhibition by SIRT6 has different effects depending on cell types: it inhibits gluconeogenesis in hepatocytes, promotes glucose sensing in pancreatic beta-cells and regulates lipid catabolism in brown adipocytes. Highly in subcutaneous adipose and visceral adipose tissues. Levels higher in piglets than in adults. Also expressed at lower levels in liver and muscle.

It is found in the cytoplasm. It localises to the nucleus. Transcription factor that is the main target of insulin signaling and regulates metabolic homeostasis in response to oxidative stress. Binds to the insulin response element (IRE) with consensus sequence 5'-TT[G/A]TTTTG-3' and the related Daf-16 family binding element (DBE) with consensus sequence 5'-TT[G/A]TTTAC-3'. Activity suppressed by insulin. Main regulator of redox balance and osteoblast numbers and controls bone mass. Orchestrates the endocrine function of the skeleton in regulating glucose metabolism. Also acts as a key regulator of chondrogenic commitment of skeletal progenitor cells in response to lipid availability: when lipids levels are low, translocates to the nucleus and promotes expression of SOX9, which induces chondrogenic commitment and suppresses fatty acid oxidation. Acts synergistically with ATF4 to suppress osteocalcin/BGLAP activity, increasing glucose levels and triggering glucose intolerance and insulin insensitivity. Also suppresses the transcriptional activity of RUNX2, an upstream activator of osteocalcin/BGLAP. Acts as an inhibitor of glucose sensing in pancreatic beta cells by acting as a transcription repressor and suppressing expression of PDX1. In hepatocytes, promotes gluconeogenesis by acting together with PPARGC1A and CEBPA to activate the expression of genes such as IGFBP1, G6PC1 and PCK1. Also promotes gluconeogenesis by directly promoting expression of PPARGC1A and G6PC1. Important regulator of cell death acting downstream of CDK1, PKB/AKT1 and STK4/MST1. Promotes neural cell death. Mediates insulin action on adipose tissue. Regulates the expression of adipogenic genes such as PPARG during preadipocyte differentiation and, adipocyte size and adipose tissue-specific gene expression in response to excessive calorie intake. Regulates the transcriptional activity of GADD45A and repair of nitric oxide-damaged DNA in beta-cells. Required for the autophagic cell death induction in response to starvation or oxidative stress in a transcription-independent manner. Mediates the function of MLIP in cardiomyocytes hypertrophy and cardiac remodeling. Positive regulator of apoptosis in cardiac smooth muscle cells as a result of its transcriptional activation of pro-apoptotic genes. Regulates endothelial cell (EC) viability and apoptosis in a PPIA/CYPA-dependent manner via transcription of CCL2 and BCL2L11 which are involved in EC chemotaxis and apoptosis. This Sus scrofa (Pig) protein is Forkhead box protein O1 (FOXO1).